The primary structure comprises 662 residues: Interferon-induced GTP-binding protein Mx1 (662 aa).

Residue M1 is modified to N-acetylmethionine; in Interferon-induced GTP-binding protein Mx1; alternate. The Dynamin-type G domain maps to 67–340 (DLALPAIAVI…LITHICKSLP (274 aa)). A G1 motif region spans residues 77 to 84 (GDQSSGKS). 77–84 (GDQSSGKS) provides a ligand contact to GTP. The tract at residues 102-104 (VTR) is G2 motif. A G3 motif region spans residues 178–181 (DLPG). GTP contacts are provided by residues 178 to 182 (DLPGI) and 247 to 250 (TKPD). Positions 247–250 (TKPD) are G4 motif. The segment at 279–282 (KCRG) is G5 motif. The tract at residues 341-366 (LLENQIKETHQRITEELQKYGVDIPE) is bundle signaling element (BSE). The tract at residues 366–533 (EDENEKMFFL…HFQMEQIVYC (168 aa)) is middle domain. A stalk region spans residues 367-632 (DENEKMFFLI…KDTYSWLLKE (266 aa)). The critical for lipid-binding stretch occupies residues 554–557 (KKKK). One can recognise a GED domain in the interval 574-662 (MEEIFQHLMA…ARRRLAQFPG (89 aa)).

Belongs to the TRAFAC class dynamin-like GTPase superfamily. Dynamin/Fzo/YdjA family. Homotetramer. Oligomerizes into multimeric filamentous or ring-like structures by virtue of its stalk domain. Oligomerization is critical for GTPase activity, protein stability, and recognition of viral target structures. Interacts with TRPC1, TRPC3, TRPC4, TRPC5, TRPC6 and TRPC7. Interacts with HSPA5. Interacts with DDX39A and DDX39B. Interacts with TUBB/TUBB5. The GTP-bound form interacts (via C-terminus) with THOV P5 protein. The GTP-bound form interacts with LACV protein N. Interacts with CCHFV protein N. Post-translationally, ISGylated.

It localises to the cytoplasm. The protein resides in the endoplasmic reticulum membrane. Its subcellular location is the perinuclear region. It is found in the nucleus. In terms of biological role, interferon-induced dynamin-like GTPase with antiviral activity against a wide range of RNA viruses and some DNA viruses. Its target viruses include negative-stranded RNA viruses and HBV through binding and inactivation of their ribonucleocapsid. May also antagonize reoviridae and asfarviridae replication. Inhibits thogoto virus (THOV) replication by preventing the nuclear import of viral nucleocapsids. Inhibits La Crosse virus (LACV) replication by sequestering viral nucleoprotein in perinuclear complexes, preventing genome amplification, budding, and egress. Inhibits influenza A virus (IAV) replication by decreasing or delaying NP synthesis and by blocking endocytic traffic of incoming virus particles. Enhances ER stress-mediated cell death after influenza virus infection. May regulate the calcium channel activity of TRPCs. The sequence is that of Interferon-induced GTP-binding protein Mx1 (MX1) from Homo sapiens (Human).